A 120-amino-acid chain; its full sequence is Protein BEX4 (120 aa).

Residues 1–54 (MESKEELAANNLNGENAQQENEGGEQAPTQNEEESRHLGGGEGQKPGGNIRRGR) are disordered. Positions 8 to 27 (AANNLNGENAQQENEGGEQA) are enriched in low complexity. The interval 31-90 (NEEESRHLGGGEGQKPGGNIRRGRVRRLVPNFRWAIPNRHIEHNEARDDVERFVGQMMEI) is interaction with SIRT2. An interaction with alpha-tubulin region spans residues 31–120 (NEEESRHLGG…DNHYDFCLIP (90 aa)). Cys117 lines the Zn(2+) pocket.

It belongs to the BEX family. In terms of assembly, interacts with alpha-tubulin. Interacts with SIRT2. Ubiquitinated and degraded by the proteasome. As to expression, very high expression in heart, skeletal muscle, liver, and kidney. The levels of expression are uniform throughout the brain.

The protein localises to the cytoplasm. The protein resides in the cytoskeleton. It is found in the spindle pole. Its subcellular location is the nucleus. Its function is as follows. May play a role in microtubule deacetylation by negatively regulating the SIRT2 deacetylase activity toward alpha-tubulin and thereby participate in the control of cell cycle progression and genomic stability. In absence of reductive stress, acts as a pseudosubstrate for the CRL2(FEM1B) complex: associates with FEM1B via zinc, thereby preventing association between FEM1B and its substrates. This Homo sapiens (Human) protein is Protein BEX4.